A 334-amino-acid polypeptide reads, in one-letter code: Beta-ketoacyl-[acyl-carrier-protein] synthase III (334 aa).

Active-site residues include Cys-114 and His-253. Residues 254 to 258 (QANIR) form an ACP-binding region. Asn-283 is an active-site residue.

Belongs to the thiolase-like superfamily. FabH family. In terms of assembly, homodimer.

The protein resides in the cytoplasm. It catalyses the reaction malonyl-[ACP] + acetyl-CoA + H(+) = 3-oxobutanoyl-[ACP] + CO2 + CoA. The protein operates within lipid metabolism; fatty acid biosynthesis. Functionally, catalyzes the condensation reaction of fatty acid synthesis by the addition to an acyl acceptor of two carbons from malonyl-ACP. Catalyzes the first condensation reaction which initiates fatty acid synthesis and may therefore play a role in governing the total rate of fatty acid production. Possesses both acetoacetyl-ACP synthase and acetyl transacylase activities. Its substrate specificity determines the biosynthesis of branched-chain and/or straight-chain of fatty acids. This is Beta-ketoacyl-[acyl-carrier-protein] synthase III from Campylobacter concisus (strain 13826).